The following is a 432-amino-acid chain: Serine hydroxymethyltransferase (432 aa).

(6S)-5,6,7,8-tetrahydrofolate contacts are provided by residues Leu127 and 131–133; that span reads GHL. Lys236 carries the N6-(pyridoxal phosphate)lysine modification.

This sequence belongs to the SHMT family. As to quaternary structure, homodimer. It depends on pyridoxal 5'-phosphate as a cofactor.

It is found in the cytoplasm. It carries out the reaction (6R)-5,10-methylene-5,6,7,8-tetrahydrofolate + glycine + H2O = (6S)-5,6,7,8-tetrahydrofolate + L-serine. It functions in the pathway one-carbon metabolism; tetrahydrofolate interconversion. It participates in amino-acid biosynthesis; glycine biosynthesis; glycine from L-serine: step 1/1. In terms of biological role, catalyzes the reversible interconversion of serine and glycine with tetrahydrofolate (THF) serving as the one-carbon carrier. This reaction serves as the major source of one-carbon groups required for the biosynthesis of purines, thymidylate, methionine, and other important biomolecules. Also exhibits THF-independent aldolase activity toward beta-hydroxyamino acids, producing glycine and aldehydes, via a retro-aldol mechanism. This is Serine hydroxymethyltransferase from Rhizobium etli (strain ATCC 51251 / DSM 11541 / JCM 21823 / NBRC 15573 / CFN 42).